A 107-amino-acid chain; its full sequence is UPF0145 protein ETA_21660 (107 aa).

Belongs to the UPF0145 family.

The chain is UPF0145 protein ETA_21660 from Erwinia tasmaniensis (strain DSM 17950 / CFBP 7177 / CIP 109463 / NCPPB 4357 / Et1/99).